A 281-amino-acid polypeptide reads, in one-letter code: Diaminopimelate epimerase (281 aa).

The substrate site is built by Asn-13, Gln-46, and Asn-66. Cys-75 acts as the Proton donor in catalysis. Substrate-binding positions include 76–77, Asn-160, Asn-193, and 211–212; these read GN and ER. Cys-220 serves as the catalytic Proton acceptor. 221–222 serves as a coordination point for substrate; that stretch reads GT.

The protein belongs to the diaminopimelate epimerase family. In terms of assembly, homodimer.

It localises to the cytoplasm. The catalysed reaction is (2S,6S)-2,6-diaminopimelate = meso-2,6-diaminopimelate. The protein operates within amino-acid biosynthesis; L-lysine biosynthesis via DAP pathway; DL-2,6-diaminopimelate from LL-2,6-diaminopimelate: step 1/1. Catalyzes the stereoinversion of LL-2,6-diaminopimelate (L,L-DAP) to meso-diaminopimelate (meso-DAP), a precursor of L-lysine and an essential component of the bacterial peptidoglycan. The sequence is that of Diaminopimelate epimerase from Acinetobacter baylyi (strain ATCC 33305 / BD413 / ADP1).